A 449-amino-acid polypeptide reads, in one-letter code: Deoxyguanosinetriphosphate triphosphohydrolase-like protein (449 aa).

The disordered stretch occupies residues 1–27 (MTSSVWQERRHGEDKQRRNDHRSPYQR). Residues 7–27 (QERRHGEDKQRRNDHRSPYQR) show a composition bias toward basic and acidic residues. In terms of domain architecture, HD spans 59-255 (RLTHSLEVSQ…MELADDIAYA (197 aa)).

The protein belongs to the dGTPase family. Type 2 subfamily.

This is Deoxyguanosinetriphosphate triphosphohydrolase-like protein from Shewanella baltica (strain OS223).